Consider the following 187-residue polypeptide: GTP cyclohydrolase 1 (187 aa).

3 residues coordinate Zn(2+): cysteine 76, histidine 79, and cysteine 148.

The protein belongs to the GTP cyclohydrolase I family. Toroid-shaped homodecamer, composed of two pentamers of five dimers.

It carries out the reaction GTP + H2O = 7,8-dihydroneopterin 3'-triphosphate + formate + H(+). Its pathway is cofactor biosynthesis; 7,8-dihydroneopterin triphosphate biosynthesis; 7,8-dihydroneopterin triphosphate from GTP: step 1/1. The sequence is that of GTP cyclohydrolase 1 from Streptococcus agalactiae serotype Ia (strain ATCC 27591 / A909 / CDC SS700).